The primary structure comprises 167 residues: Swarming motility protein SwrB (167 aa).

The disordered stretch occupies residues 63-105 (IENKASSASQSDEESQKSGLQTSETYQERDPVQEAENLPEHIE). Residues 88–105 (YQERDPVQEAENLPEHIE) are compositionally biased toward basic and acidic residues.

Functionally, required for swarming motility and for maximal sigma-D activity. This is Swarming motility protein SwrB (swrB) from Bacillus subtilis (strain 168).